A 270-amino-acid chain; its full sequence is MYTQIMTMYPLLISILHILFIISICQLCRYVSNVLVKHSLARIAIEEFICAVQLCATNFELGVITQIYGFSAYALGLFFCSFTYTFTFQDGTCDPSECYEKFCKREMSAREAVLRATFSIMGAAVSYRFAKIFWSFGLMATHMDFYKNESCDASLQVPVLIGLGFETFETIVNRLLQNMRHYNMLISAISDVCITFFGLFVSGGYFNPTLSFAMEYGCQGLSGPSFFLVYWFGPILGSSISLKIAKPLLRIIEGSDEAKVEVVDAKAHSD.

Transmembrane regions (helical) follow at residues 5–25 (IMTM…ISIC) and 59–79 (FELG…GLFF). Residues 94–96 (DPS) carry the NPA 1 motif. A helical membrane pass occupies residues 120 to 140 (IMGAAVSYRFAKIFWSFGLMA). An N-linked (GlcNAc...) asparagine glycan is attached at Asn-148. 2 consecutive transmembrane segments (helical) span residues 153–173 (ASLQ…TIVN) and 184–204 (MLIS…VSGG). The NPA 2 signature appears at 207-209 (NPT). The chain crosses the membrane as a helical span at residues 220-240 (GLSGPSFFLVYWFGPILGSSI).

The protein belongs to the MIP/aquaporin (TC 1.A.8) family.

It is found in the membrane. The catalysed reaction is H2O(in) = H2O(out). Probable intracellular unorthodox aquaporin that may modulate the water content and osmolytes during anhydrobiosis. The polypeptide is Aquaporin-11 (Milnesium tardigradum (Water bear)).